The chain runs to 160 residues: Ribonuclease H (160 aa).

Residues 5–146 (PGGLVEIWTD…VDQLATAARE (142 aa)) form the RNase H type-1 domain. Aspartate 14, glutamate 52, aspartate 74, and aspartate 138 together coordinate Mg(2+).

Belongs to the RNase H family. As to quaternary structure, monomer. Requires Mg(2+) as cofactor.

Its subcellular location is the cytoplasm. It carries out the reaction Endonucleolytic cleavage to 5'-phosphomonoester.. Endonuclease that specifically degrades the RNA of RNA-DNA hybrids. In Acidiphilium cryptum (strain JF-5), this protein is Ribonuclease H.